Here is a 102-residue protein sequence, read N- to C-terminus: Citrate lyase acyl carrier protein (102 aa).

Position 14 is an O-(phosphoribosyl dephospho-coenzyme A)serine (S14).

This sequence belongs to the CitD family. As to quaternary structure, oligomer with a subunit composition of (alpha,beta,gamma)6.

It is found in the cytoplasm. Functionally, covalent carrier of the coenzyme of citrate lyase. This is Citrate lyase acyl carrier protein from Streptococcus pyogenes serotype M4 (strain MGAS10750).